The chain runs to 218 residues: Cytochrome P450 3A19 (218 aa).

Cys-153 contacts heme.

The protein belongs to the cytochrome P450 family. Heme is required as a cofactor.

The protein localises to the endoplasmic reticulum membrane. Its subcellular location is the microsome membrane. The enzyme catalyses an organic molecule + reduced [NADPH--hemoprotein reductase] + O2 = an alcohol + oxidized [NADPH--hemoprotein reductase] + H2O + H(+). Cytochromes P450 are a group of heme-thiolate monooxygenases. In liver microsomes, this enzyme is involved in an NADPH-dependent electron transport pathway. It oxidizes a variety of structurally unrelated compounds, including steroids, fatty acids, and xenobiotics. The chain is Cytochrome P450 3A19 (CYP3A19) from Capra hircus aegagrus (Wild goat).